Reading from the N-terminus, the 843-residue chain is Pentatricopeptide repeat-containing protein At4g21880, mitochondrial (843 aa).

PPR repeat units follow at residues 392–426 (SSTSYENLVSYLCGSNEVVTALDIVENMCEAGLVI), 427–461 (SANILHSLLQAIEQILEFNLVQRIYSIMSNKSVKP), 462–496 (NSETFRKSINLCIRIKDFEGAYNMLGNLKNFNLAP), 497–531 (NSSMYNSIMAGYFREKKVNSALKVLKEMKEADVKP), 532–562 (DSVTFSYLINYCGEEATIAKYYKEMKQAGVE), 564–594 (NKHVYMSLVKAYASCGQFEKAKQVLMDLEVP), and 598–632 (HNELKSVLISALASNGNITEALSIYEEMKKLRCPV).

It belongs to the PPR family. P subfamily.

Its subcellular location is the mitochondrion. This Arabidopsis thaliana (Mouse-ear cress) protein is Pentatricopeptide repeat-containing protein At4g21880, mitochondrial.